The following is a 327-amino-acid chain: MKAPVRVTVTGAAGQISYSLLFRIAAGDMLGKDQPVILQLLEITPALKALQGVAMELDDCAFPLLAGIVTTDDPSVAFKDSDYALLVGARPRGPGMERKDLLAANAAIFSVQGKAINDHASKNIKVLVVGNPANTNALIAQRNAPDISPRQFTAMTRLDHNRALSQLATKTGTSINNITKALIWGNHSSTQYPDLHNTLVDGKPALSLVDQAWYESDYIPTVQQRGAAIIAARGASSAASAANAAINHIRDWALGTPANDWVSMGVYSDGSYGIEKGLIYSFPCVCKNGDWEIVQGLDINEFSRAKMTATEKELQEERDAVKELLPA.

11–17 (GAAGQIS) contacts NAD(+). Substrate is bound by residues Arg92 and Arg98. NAD(+) is bound by residues Asn105, Gln112, and 129 to 131 (VGN). Positions 131 and 162 each coordinate substrate. His187 acts as the Proton acceptor in catalysis.

It belongs to the LDH/MDH superfamily. MDH type 2 family.

The enzyme catalyses (S)-malate + NAD(+) = oxaloacetate + NADH + H(+). Its function is as follows. Catalyzes the reversible oxidation of malate to oxaloacetate. The polypeptide is Malate dehydrogenase (Cellvibrio japonicus (strain Ueda107) (Pseudomonas fluorescens subsp. cellulosa)).